The sequence spans 272 residues: Phosphate import ATP-binding protein PstB (272 aa).

The 248-residue stretch at 20–267 folds into the ABC transporter domain; it reads VKKEVVYETN…PADQRTADYI (248 aa). 58-65 is an ATP binding site; that stretch reads GPSGCGKS.

It belongs to the ABC transporter superfamily. Phosphate importer (TC 3.A.1.7) family. As to quaternary structure, the complex is composed of two ATP-binding proteins (PstB), two transmembrane proteins (PstC and PstA) and a solute-binding protein (PstS).

It localises to the cell membrane. The enzyme catalyses phosphate(out) + ATP + H2O = ADP + 2 phosphate(in) + H(+). Its function is as follows. Part of the ABC transporter complex PstSACB involved in phosphate import. Responsible for energy coupling to the transport system. The sequence is that of Phosphate import ATP-binding protein PstB from Geobacillus kaustophilus (strain HTA426).